A 414-amino-acid polypeptide reads, in one-letter code: MSGIIATYVIHDDSHNLTKKAEQIALGLTIGSWTHLPHLLQKQLKQHKGNVVHVEELPQQEEVNNYLGKKVTKGIIKIQYPSLNFSPDLPAILTTAFGKLSLDGEIKLIDLTFSDDLKRQFSGPKFGIEEVRKRLHVHNRPLLMSIFKGMIGRNIGYLKTQLRDQAIGGVDIVKDDEILFENALTPLEKRVRSGKEVLQSVYETYGHRTLYAVNITGRTYDVKENAKRAVNAGADLLLFNAFAYGLDVLQLLAEDQDINVPIMAHPAISGAYTSSKLYGFSHSLLLGKLLRYAGADFSLFPSPYGNVALEKKDALQIAETLTIVDSHLKRSFPVPSAGIHPGFVPFILRDFGNDVVINAGGGIHGHPNGAQGGGKAFRAAIDATLQGTPLHEVDDADLHTALQLWGNPSREVKI.

K99 functions as the Proton acceptor in the catalytic mechanism. Substrate contacts are provided by residues K148, 174–177 (KDDE), H265, G338, and 360–361 (GG). Mg(2+)-binding residues include K174, D176, and E177. The residue at position 174 (K174) is an N6-carboxylysine.

It belongs to the RuBisCO large chain family. Type IV subfamily. As to quaternary structure, homodimer. The cofactor is Mg(2+).

The catalysed reaction is 5-methylsulfanyl-2,3-dioxopentyl phosphate = 2-hydroxy-5-methylsulfanyl-3-oxopent-1-enyl phosphate. The protein operates within amino-acid biosynthesis; L-methionine biosynthesis via salvage pathway; L-methionine from S-methyl-5-thio-alpha-D-ribose 1-phosphate: step 3/6. Its function is as follows. Catalyzes the enolization of 2,3-diketo-5-methylthiopentyl-1-phosphate (DK-MTP-1-P) into 2-hydroxy-3-keto-5-methylthiopentenyl-1-phosphate (HK-MTPenyl-1-P). In Bacillus cytotoxicus (strain DSM 22905 / CIP 110041 / 391-98 / NVH 391-98), this protein is 2,3-diketo-5-methylthiopentyl-1-phosphate enolase.